Here is a 174-residue protein sequence, read N- to C-terminus: Regenerating islet-derived protein 3-gamma (174 aa).

Positions 1–26 (MLPRITITIMSWMLLSCLMLLSQVQG) are cleaved as a signal peptide. A propeptide spanning residues 27–37 (EVAKKDAPSSR) is cleaved from the precursor. 3 disulfides stabilise this stretch: Cys40/Cys51, Cys68/Cys170, and Cys145/Cys162. The C-type lectin domain occupies 47–171 (YGSYCYALFS…CNLELPYVCK (125 aa)). The sufficient to activate EXTL3 stretch occupies residues 103–118 (WIGLHDPTLGYEPNRG). Residue His107 coordinates Zn(2+). The short motif at 114–116 (EPN) is the EPN element. Glu121 and His144 together coordinate Zn(2+).

As to quaternary structure, forms a hexameric membrane-permeabilizing oligomeric pore on membrane phospholipids. The hexamer is formed by three dimers related by helical symmetry. Forms filaments, filamentation traps pore complexes and limits damage to host cells. Interacts with EXTL3. In terms of processing, proteolytic processing by trypsin removes an inhibitory N-terminal propeptide and is essential for peptidoglycan binding and antibacterial activity. In terms of tissue distribution, predominantly expressed in the small intestine, including Paneth cells (at protein level). Hardly detectable in the colon (at protein level). Highly expressed in the lung epithelium during methicillin-resistant S.aureus infection and allergic airway inflammation (at protein level). Skin injury increases its epidermal expression. Also expressed in the pancreas. Expressed by nocireceptors.

It is found in the secreted. It localises to the cytoplasm. With respect to regulation, lipopolysaccharide inhibits pore-forming activity, explaining why is bactericidal for Gram-positive but not Gram-negative bacteria. Its function is as follows. Bactericidal C-type lectin which acts exclusively against Gram-positive bacteria and mediates bacterial killing by binding to surface-exposed carbohydrate moieties of peptidoglycan. Restricts bacterial colonization of the intestinal epithelial surface and consequently limits activation of adaptive immune responses by the microbiota. In terms of biological role, acts as a hormone in response to different stimuli like anti-inflammatory signals, such as IL17A, or gut microbiome. Is secreted by different cell types to activate its receptor EXTL3 and induce cell specific signaling pathways. Induced by IL17A in keratinocytes, regulates keratinocyte proliferation and differentiation after skin injury. In parallel, inhibits skin inflammation through the inhibition of inflammatory cytokines such as IL6 and TNF. Induced by IL22 in lung epithelial cells, inhibits cytokine production and regulates allergic airway inflammation. Induced in small intestine by inulin-enriched diet and Lactobacillus gasseri enriched microbiome, plays a role in the improvement of gut barrier function, the regulation of energy balance and glucose levels. Modulates microbiota composition in duodenal contents. Produced by nociceptor in response to endotoxins, prevents endotoxic death by targeting kynurenine pathway in microglia. Has bacteriostatic activity. Functionally, has bactericidal activity against L.monocytogenes and methicillin-resistant S.aureus. The chain is Regenerating islet-derived protein 3-gamma from Mus musculus (Mouse).